The primary structure comprises 234 residues: Phosphatidylcholine synthase (234 aa).

Residues 1-3 (MKN) lie on the Cytoplasmic side of the membrane. A helical membrane pass occupies residues 4–24 (INLILAWLVHIFTASGLIVGL). Over 25 to 26 (YS) the chain is Periplasmic. Residues 27-47 (IISIVNGNYSLLLKLTVIGLI) form a helical membrane-spanning segment. Over 48–75 (IDGIDGTMARKLKVKELIPEIDGTLLDN) the chain is Cytoplasmic. The chain crosses the membrane as a helical span at residues 76–96 (ITDYINYTFIPVIFFYLGEFI). The Periplasmic portion of the chain corresponds to 97 to 98 (EE). A helical membrane pass occupies residues 99–116 (KYKVAICIGILLSSAYQF). Residues 117 to 126 (SRTDAKTNDN) lie on the Cytoplasmic side of the membrane. Residues 127–147 (YFRGFPSLWNLFVILNIIFKM) traverse the membrane as a helical segment. Residues 148-149 (EQ) lie on the Periplasmic side of the membrane. Residues 150 to 170 (ITNLITMSICIITSFIPIKFI) traverse the membrane as a helical segment. Residues 171–180 (YPSKTKELRK) are Cytoplasmic-facing. The chain crosses the membrane as a helical span at residues 181–201 (ITIPITIISCLIFVVSIFSEL). Topologically, residues 202-207 (STTALK) are periplasmic. The helical transmembrane segment at 208-228 (MAKTVLILYFAYLTLASIYLT) threads the bilayer. Topologically, residues 229–234 (YKTRNR) are cytoplasmic.

The protein belongs to the CDP-alcohol phosphatidyltransferase class-I family. Mn(2+) is required as a cofactor.

The protein resides in the cell inner membrane. It carries out the reaction a CDP-1,2-diacyl-sn-glycerol + choline = a 1,2-diacyl-sn-glycero-3-phosphocholine + CMP + H(+). Functionally, condenses choline with CDP-diglyceride to produce phosphatidylcholine and CMP. The protein is Phosphatidylcholine synthase of Borreliella burgdorferi (strain ATCC 35210 / DSM 4680 / CIP 102532 / B31) (Borrelia burgdorferi).